Here is a 191-residue protein sequence, read N- to C-terminus: Vascular endothelial growth factor A (191 aa).

The N-terminal stretch at 1 to 26 (MNFLLTWIHWGLAALLYFHNAKVLQA) is a signal peptide. Intrachain disulfides connect Cys52-Cys94, Cys83-Cys128, and Cys87-Cys130. The N-linked (GlcNAc...) asparagine glycan is linked to Asn101.

This sequence belongs to the PDGF/VEGF growth factor family. As to quaternary structure, homodimer; disulfide-linked. Also found as heterodimer with PGF. In terms of tissue distribution, expressed by the venom gland, and probably other tissues.

Its subcellular location is the secreted. In terms of biological role, growth factor active in angiogenesis, vasculogenesis and endothelial cell growth. Induces endothelial cell proliferation, promotes cell migration, inhibits apoptosis and induces permeabilization of blood vessels. Binds to heparan sulfate and heparin. This is Vascular endothelial growth factor A from Bitis gabonica (Gaboon adder).